Reading from the N-terminus, the 452-residue chain is MSLMQFSGLLVVWLLSTLFIATLTWFEFRRVRFNFNVFFSLLFLLTFFFGFPLTSVLVFRFDVGVAPPEILLQALLSAACFYGVYYVTYKTRLRKRVVDVPRKPLFTMNRVETHLTWVILMGIALVSVAIFFMHNGFLLFRLHSYSQIFSSEVSGVALKRFFYFFIPAMLVVYFLRQDSKAWLFFLVSTVAFGLLTYMIVGGTRANIIIAFAIFLFIGIIRGWISLWMLAAAGVLGIVGMFWLALKRYGLNVSGDEAFYTFLYLTRDTFSPWENLALLLQNYHNIDFQGLAPIVRDFYVFIPTWLWPGRPSIVLNSANYFTWEVLNNHSGLAISPTLIGSLVVMGGALFIPLGAIVVGLIIKWFDWLYELGNREPNRYKAAILHSFCFGAIFNMIVLAREGLDSFVSRVVFFLVVFGASLLVAKLLFWLFDSAGLIHKRTTSLPQAQVEGKL.

11 consecutive transmembrane segments (helical) span residues 6–26 (FSGL…LTWF), 37–57 (VFFS…TSVL), 63–83 (VGVA…CFYG), 118–138 (VILM…NGFL), 155–175 (GVAL…VYFL), 181–201 (AWLF…MIVG), 207–227 (IIIA…ISLW), 228–248 (MLAA…LKRY), 341–361 (LVVM…GLII), 378–398 (YKAA…IVLA), and 410–430 (VFFL…FWLF).

This sequence belongs to the WzyE family. In terms of assembly, probably part of a complex composed of WzxE, WzyE and WzzE.

Its subcellular location is the cell inner membrane. Its pathway is bacterial outer membrane biogenesis; enterobacterial common antigen biosynthesis. Its function is as follows. Probably involved in the polymerization of enterobacterial common antigen (ECA) trisaccharide repeat units. This chain is Probable ECA polymerase, found in Salmonella heidelberg (strain SL476).